The primary structure comprises 252 residues: tRNA pseudouridine synthase A (252 aa).

D52 (nucleophile) is an active-site residue. Y110 serves as a coordination point for substrate.

This sequence belongs to the tRNA pseudouridine synthase TruA family. As to quaternary structure, homodimer.

The enzyme catalyses uridine(38/39/40) in tRNA = pseudouridine(38/39/40) in tRNA. In terms of biological role, formation of pseudouridine at positions 38, 39 and 40 in the anticodon stem and loop of transfer RNAs. The polypeptide is tRNA pseudouridine synthase A (Syntrophotalea carbinolica (strain DSM 2380 / NBRC 103641 / GraBd1) (Pelobacter carbinolicus)).